We begin with the raw amino-acid sequence, 550 residues long: Hydroxylamine reductase (550 aa).

Residues Cys-3, Cys-6, Cys-18, and Cys-25 each contribute to the [2Fe-2S] cluster site. 8 residues coordinate hybrid [4Fe-2O-2S] cluster: His-249, Glu-273, Cys-317, Cys-405, Cys-433, Cys-458, Glu-492, and Lys-494. Cys-405 bears the Cysteine persulfide mark.

The protein belongs to the HCP family. The cofactor is [2Fe-2S] cluster. It depends on hybrid [4Fe-2O-2S] cluster as a cofactor.

Its subcellular location is the cytoplasm. The enzyme catalyses A + NH4(+) + H2O = hydroxylamine + AH2 + H(+). In terms of biological role, catalyzes the reduction of hydroxylamine to form NH(3) and H(2)O. This is Hydroxylamine reductase from Salmonella typhi.